The primary structure comprises 89 residues: Small ribosomal subunit protein bS20 (89 aa).

The span at M1 to K12 shows a compositional bias: basic residues. The disordered stretch occupies residues M1–Q24.

The protein belongs to the bacterial ribosomal protein bS20 family.

Functionally, binds directly to 16S ribosomal RNA. This is Small ribosomal subunit protein bS20 from Xanthomonas campestris pv. campestris (strain 8004).